A 595-amino-acid polypeptide reads, in one-letter code: 2-succinyl-5-enolpyruvyl-6-hydroxy-3-cyclohexene-1-carboxylate synthase (595 aa).

This sequence belongs to the TPP enzyme family. MenD subfamily. As to quaternary structure, homodimer. Mg(2+) is required as a cofactor. Requires Mn(2+) as cofactor. The cofactor is thiamine diphosphate.

It catalyses the reaction isochorismate + 2-oxoglutarate + H(+) = 5-enolpyruvoyl-6-hydroxy-2-succinyl-cyclohex-3-ene-1-carboxylate + CO2. It functions in the pathway quinol/quinone metabolism; 1,4-dihydroxy-2-naphthoate biosynthesis; 1,4-dihydroxy-2-naphthoate from chorismate: step 2/7. It participates in cofactor biosynthesis; phylloquinone biosynthesis. Catalyzes the thiamine diphosphate-dependent decarboxylation of 2-oxoglutarate and the subsequent addition of the resulting succinic semialdehyde-thiamine pyrophosphate anion to isochorismate to yield 2-succinyl-5-enolpyruvyl-6-hydroxy-3-cyclohexene-1-carboxylate (SEPHCHC). The chain is 2-succinyl-5-enolpyruvyl-6-hydroxy-3-cyclohexene-1-carboxylate synthase from Synechocystis sp. (strain ATCC 27184 / PCC 6803 / Kazusa).